Here is a 386-residue protein sequence, read N- to C-terminus: Succinate--CoA ligase [ADP-forming] subunit beta (386 aa).

Residues K46, 53-55 (GRG), E99, A102, and E107 contribute to the ATP site. Residues N199 and D213 each coordinate Mg(2+). Substrate-binding positions include N264 and 321–323 (GIV).

This sequence belongs to the succinate/malate CoA ligase beta subunit family. In terms of assembly, heterotetramer of two alpha and two beta subunits. Mg(2+) serves as cofactor.

It catalyses the reaction succinate + ATP + CoA = succinyl-CoA + ADP + phosphate. The catalysed reaction is GTP + succinate + CoA = succinyl-CoA + GDP + phosphate. It functions in the pathway carbohydrate metabolism; tricarboxylic acid cycle; succinate from succinyl-CoA (ligase route): step 1/1. Functionally, succinyl-CoA synthetase functions in the citric acid cycle (TCA), coupling the hydrolysis of succinyl-CoA to the synthesis of either ATP or GTP and thus represents the only step of substrate-level phosphorylation in the TCA. The beta subunit provides nucleotide specificity of the enzyme and binds the substrate succinate, while the binding sites for coenzyme A and phosphate are found in the alpha subunit. The sequence is that of Succinate--CoA ligase [ADP-forming] subunit beta from Actinobacillus succinogenes (strain ATCC 55618 / DSM 22257 / CCUG 43843 / 130Z).